Consider the following 238-residue polypeptide: Tyrosine recombinase XerD-like (238 aa).

In terms of domain architecture, Core-binding (CB) spans 1 to 75 (MKLPNEIDEY…SANQYLLFLY (75 aa)). A Tyr recombinase domain is found at 90-238 (VQKKSQTAQS…TITTLEKYYR (149 aa)). Residues Lys-154 and Arg-204 contribute to the active site. Residue Tyr-236 is the O-(3'-phospho-DNA)-tyrosine intermediate of the active site.

This sequence belongs to the 'phage' integrase family. XerD-like subfamily.

It is found in the cytoplasm. Putative tyrosine recombinase. Not involved in the cutting and rejoining of the recombining DNA molecules on dif(SL) site. The chain is Tyrosine recombinase XerD-like (ynbA) from Lactococcus lactis subsp. lactis (strain IL1403) (Streptococcus lactis).